A 140-amino-acid polypeptide reads, in one-letter code: MRLSWILTILSICLSALAAATGAEGKRKLQIGVKKRVDHCPIKSRKGDVLHMHYTGKLEDGTEFDSSLPQNQPFVFSLGTGQVIKGWDQGLLGMCEGEKRKLVIPSELGYGERGAPPKIPGGATLVFEVELLKIERRSEL.

Residues 1–22 (MRLSWILTILSICLSALAAATG) form the signal peptide. The 89-residue stretch at 47 to 135 (GDVLHMHYTG…VFEVELLKIE (89 aa)) folds into the PPIase FKBP-type domain. Residues 137–140 (RSEL) carry the Prevents secretion from ER motif.

Belongs to the FKBP-type PPIase family. FKBP2 subfamily. As to quaternary structure, interacts with ARFGEF1/BIG1 and the C-terminal of EPB41L2.

It localises to the endoplasmic reticulum membrane. The enzyme catalyses [protein]-peptidylproline (omega=180) = [protein]-peptidylproline (omega=0). Its activity is regulated as follows. Inhibited by both FK506 and rapamycin. Functionally, PPIases accelerate the folding of proteins. It catalyzes the cis-trans isomerization of proline imidic peptide bonds in oligopeptides. This is Peptidyl-prolyl cis-trans isomerase FKBP2 (Fkbp2) from Mus musculus (Mouse).